Consider the following 87-residue polypeptide: Protein moa-2 (87 aa).

Residues 23 to 87 (GTAMRHEPSR…VWTASREESS (65 aa)) are disordered. 2 stretches are compositionally biased toward basic and acidic residues: residues 26-39 (MRHE…ESAP) and 50-63 (RNEH…EREP).

This is Protein moa-2 from Caenorhabditis elegans.